The following is a 132-amino-acid chain: Small ribosomal subunit protein uS8 (132 aa).

Belongs to the universal ribosomal protein uS8 family. In terms of assembly, part of the 30S ribosomal subunit. Contacts proteins S5 and S12.

In terms of biological role, one of the primary rRNA binding proteins, it binds directly to 16S rRNA central domain where it helps coordinate assembly of the platform of the 30S subunit. The chain is Small ribosomal subunit protein uS8 from Psychrobacter sp. (strain PRwf-1).